A 231-amino-acid polypeptide reads, in one-letter code: Small ribosomal subunit protein uS3 (231 aa).

Residues 39 to 107 (IRKHIMKAIP…DVSLNIVEIR (69 aa)) enclose the KH type-2 domain.

Belongs to the universal ribosomal protein uS3 family. Part of the 30S ribosomal subunit. Forms a tight complex with proteins S10 and S14.

In terms of biological role, binds the lower part of the 30S subunit head. Binds mRNA in the 70S ribosome, positioning it for translation. The chain is Small ribosomal subunit protein uS3 from Rhizorhabdus wittichii (strain DSM 6014 / CCUG 31198 / JCM 15750 / NBRC 105917 / EY 4224 / RW1) (Sphingomonas wittichii).